A 329-amino-acid chain; its full sequence is uncharacterized protein (329 aa).

This is an uncharacterized protein from Bacillus subtilis (strain 168).